The primary structure comprises 919 residues: Isoleucine--tRNA ligase (919 aa).

Positions 57-67 (PYANGHIHIGT) match the 'HIGH' region motif. E553 lines the L-isoleucyl-5'-AMP pocket. The 'KMSKS' region motif lies at 594-598 (KMSKS). Position 597 (K597) interacts with ATP. Zn(2+) contacts are provided by C887, C890, C907, and C910.

This sequence belongs to the class-I aminoacyl-tRNA synthetase family. IleS type 1 subfamily. In terms of assembly, monomer. It depends on Zn(2+) as a cofactor.

The protein resides in the cytoplasm. It carries out the reaction tRNA(Ile) + L-isoleucine + ATP = L-isoleucyl-tRNA(Ile) + AMP + diphosphate. Functionally, catalyzes the attachment of isoleucine to tRNA(Ile). As IleRS can inadvertently accommodate and process structurally similar amino acids such as valine, to avoid such errors it has two additional distinct tRNA(Ile)-dependent editing activities. One activity is designated as 'pretransfer' editing and involves the hydrolysis of activated Val-AMP. The other activity is designated 'posttransfer' editing and involves deacylation of mischarged Val-tRNA(Ile). The polypeptide is Isoleucine--tRNA ligase (Thermotoga petrophila (strain ATCC BAA-488 / DSM 13995 / JCM 10881 / RKU-1)).